A 295-amino-acid chain; its full sequence is 33 kDa chaperonin (295 aa).

Intrachain disulfides connect Cys238/Cys240 and Cys271/Cys274.

It belongs to the HSP33 family. In terms of processing, under oxidizing conditions two disulfide bonds are formed involving the reactive cysteines. Under reducing conditions zinc is bound to the reactive cysteines and the protein is inactive.

Its subcellular location is the cytoplasm. In terms of biological role, redox regulated molecular chaperone. Protects both thermally unfolding and oxidatively damaged proteins from irreversible aggregation. Plays an important role in the bacterial defense system toward oxidative stress. The protein is 33 kDa chaperonin of Levilactobacillus brevis (strain ATCC 367 / BCRC 12310 / CIP 105137 / JCM 1170 / LMG 11437 / NCIMB 947 / NCTC 947) (Lactobacillus brevis).